A 757-amino-acid chain; its full sequence is Endonuclease MutS2 (757 aa).

Position 321-328 (321-328 (GPNMGGKT)) interacts with ATP. Residues 681 to 756 (IDIRGMTVEE…GTGVTVVEVK (76 aa)) enclose the Smr domain.

It belongs to the DNA mismatch repair MutS family. MutS2 subfamily. In terms of assembly, homodimer. Binds to stalled ribosomes, contacting rRNA.

Functionally, endonuclease that is involved in the suppression of homologous recombination and thus may have a key role in the control of bacterial genetic diversity. In terms of biological role, acts as a ribosome collision sensor, splitting the ribosome into its 2 subunits. Detects stalled/collided 70S ribosomes which it binds and splits by an ATP-hydrolysis driven conformational change. Acts upstream of the ribosome quality control system (RQC), a ribosome-associated complex that mediates the extraction of incompletely synthesized nascent chains from stalled ribosomes and their subsequent degradation. Probably generates substrates for RQC. This chain is Endonuclease MutS2, found in Thermotoga petrophila (strain ATCC BAA-488 / DSM 13995 / JCM 10881 / RKU-1).